The chain runs to 447 residues: tRNA-2-methylthio-N(6)-dimethylallyladenosine synthase (447 aa).

The MTTase N-terminal domain maps to 10–128 (KLFCISTYGC…FPEYLHRVLQ (119 aa)). [4Fe-4S] cluster-binding residues include cysteine 19, cysteine 55, cysteine 89, cysteine 165, cysteine 169, and cysteine 172. In terms of domain architecture, Radical SAM core spans 151 to 382 (RKSDVKAFVT…EAINKKVVIK (232 aa)). Residues 384–447 (KEYEGKVVEV…PFSLIGEIVE (64 aa)) form the TRAM domain.

This sequence belongs to the methylthiotransferase family. MiaB subfamily. As to quaternary structure, monomer. The cofactor is [4Fe-4S] cluster.

It localises to the cytoplasm. It carries out the reaction N(6)-dimethylallyladenosine(37) in tRNA + (sulfur carrier)-SH + AH2 + 2 S-adenosyl-L-methionine = 2-methylsulfanyl-N(6)-dimethylallyladenosine(37) in tRNA + (sulfur carrier)-H + 5'-deoxyadenosine + L-methionine + A + S-adenosyl-L-homocysteine + 2 H(+). Catalyzes the methylthiolation of N6-(dimethylallyl)adenosine (i(6)A), leading to the formation of 2-methylthio-N6-(dimethylallyl)adenosine (ms(2)i(6)A) at position 37 in tRNAs that read codons beginning with uridine. This chain is tRNA-2-methylthio-N(6)-dimethylallyladenosine synthase, found in Clostridium perfringens (strain ATCC 13124 / DSM 756 / JCM 1290 / NCIMB 6125 / NCTC 8237 / Type A).